A 356-amino-acid chain; its full sequence is DNA polymerase IV (356 aa).

Residues 1–188 enclose the UmuC domain; that stretch reads MDTSRKIIHI…IPVTKFYGVG (188 aa). Mg(2+) contacts are provided by Asp-11 and Asp-106. Glu-107 is a catalytic residue.

It belongs to the DNA polymerase type-Y family. As to quaternary structure, monomer. It depends on Mg(2+) as a cofactor.

It is found in the cytoplasm. It catalyses the reaction DNA(n) + a 2'-deoxyribonucleoside 5'-triphosphate = DNA(n+1) + diphosphate. In terms of biological role, poorly processive, error-prone DNA polymerase involved in untargeted mutagenesis. Copies undamaged DNA at stalled replication forks, which arise in vivo from mismatched or misaligned primer ends. These misaligned primers can be extended by PolIV. Exhibits no 3'-5' exonuclease (proofreading) activity. May be involved in translesional synthesis, in conjunction with the beta clamp from PolIII. The polypeptide is DNA polymerase IV (Listeria monocytogenes serovar 1/2a (strain ATCC BAA-679 / EGD-e)).